We begin with the raw amino-acid sequence, 889 residues long: Serine/threonine-protein kinase D3 (889 aa).

A phosphoserine mark is found at S27, S37, S41, and S44. The Phorbol-ester/DAG-type 1 zinc-finger motif lies at 154-204 (PHALYVHSYKAPTFCDYCGEMLWGLVRQGLKCEGCGLNYHKRCAFKIPNNC). Phosphoserine is present on residues S213 and S216. The Phorbol-ester/DAG-type 2 zinc finger occupies 271-321 (PHTFAVHSYGRPTICQYCKRLLKGLFRQGMQCKDCKFNCHKRCASKVPRDC). Residues 336 to 370 (TDADMPMDIDSSDVNSDGSRGLDDSEEPSPPEDKM) form a disordered region. Phosphoserine is present on residues S346, S391, and S395. The 117-residue stretch at 416–532 (TVVKEGWMVH…WEKAIRQALM (117 aa)) folds into the PH domain. Y426 carries the post-translational modification Phosphotyrosine. Phosphoserine is present on S442. Y457 bears the Phosphotyrosine mark. Phosphothreonine is present on T535. S539 is modified (phosphoserine). The region spanning 575–831 (IFADEVLGSG…VDKSLSHPWL (257 aa)) is the Protein kinase domain. Residues 581–589 (LGSGQFGIV) and K604 each bind ATP. The active-site Proton acceptor is the D698. A Phosphoserine; by PKC modification is found at S730. S734 is subject to Phosphoserine; by autocatalysis. The residue at position 741 (Y741) is a Phosphotyrosine.

It belongs to the protein kinase superfamily. CAMK Ser/Thr protein kinase family. PKD subfamily. Requires Mg(2+) as cofactor.

It is found in the cytoplasm. The protein localises to the membrane. It carries out the reaction L-seryl-[protein] + ATP = O-phospho-L-seryl-[protein] + ADP + H(+). It catalyses the reaction L-threonyl-[protein] + ATP = O-phospho-L-threonyl-[protein] + ADP + H(+). Its activity is regulated as follows. Activated by DAG and phorbol esters. Phorbol-ester/DAG-type domains 1 and 2 bind both DAG and phorbol ester with high affinity and mediate translocation to the cell membrane. Autophosphorylation of Ser-734 and phosphorylation of Ser-730 by PKC relieves auto-inhibition by the PH domain. Functionally, converts transient diacylglycerol (DAG) signals into prolonged physiological effects, downstream of PKC. Involved in resistance to oxidative stress. The sequence is that of Serine/threonine-protein kinase D3 (Prkd3) from Mus musculus (Mouse).